The following is a 258-amino-acid chain: Synaptosomal-associated protein 29 (258 aa).

Residues 1-41 form a disordered region; it reads MSAYPKSYNPFDDDGEDEGARPAPWRDARDLPDGPDAPADR. Residues 18-32 show a composition bias toward basic and acidic residues; sequence EGARPAPWRDARDLP. The stretch at 76–107 forms a coiled coil; the sequence is ASSEELARQRGVLERTEKMVDKMDQDLKISQK. Phosphoserine occurs at positions 77, 78, and 114. Residues 127–190 form a disordered region; it reads PVETPPEQNG…GSAVSTDAYP (64 aa). Phosphothreonine occurs at positions 130 and 137. Positions 132–144 are enriched in polar residues; the sequence is PEQNGTLASQPNS. Phosphoserine occurs at positions 163, 182, 185, 204, and 210. The t-SNARE coiled-coil homology domain occupies 196-258; the sequence is QAYHQKIDSN…KSTERKVRQL (63 aa).

The protein belongs to the SNAP-25 family. In terms of assembly, forms a SNARE complex, composed of VAMP8, SNAP29 and STX17, involved in fusion of autophagosome with lysosome. Interacts with multiple syntaxins including STX6. Interacts with EIPR1. Interacts with STX17; this interaction is increased in the absence of TMEM39A.

The protein localises to the cytoplasm. It localises to the golgi apparatus membrane. Its subcellular location is the cytoplasmic vesicle. The protein resides in the autophagosome membrane. It is found in the cell projection. The protein localises to the cilium membrane. Functionally, SNAREs, soluble N-ethylmaleimide-sensitive factor-attachment protein receptors, are essential proteins for fusion of cellular membranes. SNAREs localized on opposing membranes assemble to form a trans-SNARE complex, an extended, parallel four alpha-helical bundle that drives membrane fusion. SNAP29 is a SNARE involved in autophagy through the direct control of autophagosome membrane fusion with the lysososome membrane. Also plays a role in ciliogenesis by regulating membrane fusions. This is Synaptosomal-associated protein 29 from Pongo abelii (Sumatran orangutan).